We begin with the raw amino-acid sequence, 157 residues long: uncharacterized protein (157 aa).

An N-terminal signal peptide occupies residues 1 to 17; the sequence is MSMKTKAAFHLVLFGLA. Residue C18 is the site of N-palmitoyl cysteine attachment. C18 carries the S-diacylglycerol cysteine lipid modification. The next 3 helical transmembrane spans lie at 42-64, 98-120, and 124-146; these read MVFD…YLYL, ASYI…YPLF, and IPFF…YVIS.

Its subcellular location is the cell membrane. This is an uncharacterized protein from Bacillus subtilis (strain 168).